Reading from the N-terminus, the 421-residue chain is MEKFRVIGSTQPLVGEVTISGAKNAALPILFASILAEEPVEVANVPHLRDIDTTMELLKRLGAKVERNGSVHVDPSSIDEYCAPYDLVKTMRASIWALGPLVARFGQGQVSLPGGCAIGARPVDLHITGLEQLGATITLEDGYVKAHVDGRLQGAHIVMDKVSVGATITIMCAATLAEGTTVLDNAAREPEIVDTAKFLNTLGAKISGAGTDTITIEGVERLGGGKHAVVADRIETGTFLVAAAVSGGKVVCHNTQAHLLEAVLAKLEEAGALVETGEDWISVDMTGRELKAVNIRTAPHPGFPTDMQAQFTLLNMMAKGGGVITETIFENRFMHVPELKRMGAKAEIEGNTVICGDVERLSAAQVMATDLRASASLVIAGCIAKGETIVDRIYHIDRGYDKIENKLNALGAKIERFRESN.

Lysine 23 to asparagine 24 lines the phosphoenolpyruvate pocket. Arginine 92 is a binding site for UDP-N-acetyl-alpha-D-glucosamine. Cysteine 116 acts as the Proton donor in catalysis. Position 116 is a 2-(S-cysteinyl)pyruvic acid O-phosphothioketal (cysteine 116). Residues arginine 121–leucine 125, lysine 161–valine 164, aspartate 306, and isoleucine 328 contribute to the UDP-N-acetyl-alpha-D-glucosamine site.

Belongs to the EPSP synthase family. MurA subfamily.

It localises to the cytoplasm. It carries out the reaction phosphoenolpyruvate + UDP-N-acetyl-alpha-D-glucosamine = UDP-N-acetyl-3-O-(1-carboxyvinyl)-alpha-D-glucosamine + phosphate. The protein operates within cell wall biogenesis; peptidoglycan biosynthesis. Its function is as follows. Cell wall formation. Adds enolpyruvyl to UDP-N-acetylglucosamine. The chain is UDP-N-acetylglucosamine 1-carboxyvinyltransferase from Vibrio vulnificus (strain CMCP6).